The sequence spans 87 residues: Small ribosomal subunit protein bS18 (87 aa).

The protein belongs to the bacterial ribosomal protein bS18 family. As to quaternary structure, part of the 30S ribosomal subunit. Forms a tight heterodimer with protein bS6.

In terms of biological role, binds as a heterodimer with protein bS6 to the central domain of the 16S rRNA, where it helps stabilize the platform of the 30S subunit. The chain is Small ribosomal subunit protein bS18 from Nitratidesulfovibrio vulgaris (strain DSM 19637 / Miyazaki F) (Desulfovibrio vulgaris).